A 529-amino-acid chain; its full sequence is Probable serine/threonine protein phosphatase 2A regulatory subunit B''epsilon (529 aa).

Residues 60–110 form a disordered region; the sequence is KSGTPTNKSKNLPSVFLSSSTPPLSPRSSSGSPRFSRQRTSPPSLHSPLRS. Residues 71-109 are compositionally biased toward low complexity; that stretch reads LPSVFLSSSTPPLSPRSSSGSPRFSRQRTSPPSLHSPLR. In terms of domain architecture, EF-hand spans 381–416; sequence SSEPSLEYWFKCVDLDGNGVITSNEMQFFFEEQLHR. The Ca(2+) site is built by Asp-394, Asp-396, Asn-398, and Glu-405. Residues 507 to 529 are disordered; it reads EEDVDEVSNGSADVWDEPLEPPF. Positions 520-529 are enriched in acidic residues; that stretch reads VWDEPLEPPF.

In terms of assembly, PP2A consists of a common heterodimeric core enzyme, composed of a 36 kDa catalytic subunit (subunit C) and a 65 kDa constant regulatory subunit (PR65 or subunit A), that associates with a variety of regulatory subunits. Proteins that associate with the core dimer include three families of regulatory subunits B (the R2/B/PR55/B55, R3/B''/PR72/PR130/PR59 and R5/B'/B56 families) and cell signaling molecules.

Functionally, probable regulatory subunit of type 2A protein phosphatase. The chain is Probable serine/threonine protein phosphatase 2A regulatory subunit B''epsilon (B''EPSILON) from Arabidopsis thaliana (Mouse-ear cress).